Here is a 352-residue protein sequence, read N- to C-terminus: Heat-inducible transcription repressor HrcA (352 aa).

This sequence belongs to the HrcA family.

Its function is as follows. Negative regulator of class I heat shock genes (grpE-dnaK-dnaJ and groELS operons). Prevents heat-shock induction of these operons. The sequence is that of Heat-inducible transcription repressor HrcA from Lactobacillus gasseri (strain ATCC 33323 / DSM 20243 / BCRC 14619 / CIP 102991 / JCM 1131 / KCTC 3163 / NCIMB 11718 / NCTC 13722 / AM63).